Here is an 80-residue protein sequence, read N- to C-terminus: AACQLGTAASFARDKQDYPAVRSDGRQDSKDSTLDRIAKRCSEGGDFCSKNSECCDKKCQDEGEGRGVCLIVPQNVILLH.

Positions 1-8 are cleaved as a signal peptide; sequence AACQLGTA. The propeptide occupies 9–40; that stretch reads ASFARDKQDYPAVRSDGRQDSKDSTLDRIAKR. 3 cysteine pairs are disulfide-bonded: cysteine 41–cysteine 55, cysteine 48–cysteine 59, and cysteine 54–cysteine 69.

The protein belongs to the conotoxin O1 superfamily. Expressed by the venom duct.

The protein localises to the secreted. The chain is Conotoxin Bu14 from Conus bullatus (Bubble cone).